The following is a 1148-amino-acid chain: Protein pianissimo A (1148 aa).

Over residues 1–34 (MTSSDSSVNTTSSSFGNISISSPNHSSSTPPLNN) the composition is skewed to low complexity. A disordered region spans residues 1–41 (MTSSDSSVNTTSSSFGNISISSPNHSSSTPPLNNGNGNNVS). In terms of domain architecture, N-terminal Ras-GEF spans 803–914 (KVSALSLNVL…STSGVYLPPH (112 aa)).

Belongs to the RICTOR family. Part of a complex, TORC2, consisting of tor, lst8, piaA and ripA. Additional proteins, such as 14-3-3 and heat-shock proteins, may also belong to the TORC2 complex.

The protein resides in the cytoplasm. Regulates cell growth, chemotaxis, signal relay and the actin cytoskeleton. Required for chemoattractant receptor and G protein-mediated activation of the 12 transmembrane domain adenylyl cyclase. Functions as a part of protein complex TORC2. TORC2, is presumed to be indirectly negatively modulated by rapamycin and regulates actin polarization. TORC2, but not TORC1, negatively regulates phagocytosis. This protein and dagA protein CRAC, a cytosolic regulator, are both essential for activation of the enzyme adenylyl cyclase. This protein and CRAC do not function redundantly. Both proteins are integral components of the adenylyl cyclase activation pathway. The sequence is that of Protein pianissimo A (piaA) from Dictyostelium discoideum (Social amoeba).